Consider the following 270-residue polypeptide: MAGSAGEQTISGYIQHHLTNASVGEGFWTFHVDTLAWSVVLGLVFILSFRAVAKKASAGVPGKWQACVELIVEFVDDTVKSTYHGKSALIAPLALTIFVWVLLMNLMDLIPVDFLPTAAALIAGESMDVIAAGQSHTYMKVVPTTDVNMTFALSLGVFALMIFYSVKIKGFGGFMKELYAHPFNTPWLYWFNFILELVSLIAKPLSLSLRLFGNLYAGELIFILIAGTLGVWQLPIHFLWAAFHLLVIPLQAFIFMMLTIVYLSLASEEH.

6 helical membrane passes run 27-47 (FWTFHVDTLAWSVVLGLVFIL), 90-110 (IAPLALTIFVWVLLMNLMDLI), 147-166 (VNMTFALSLGVFALMIFYSV), 182-202 (PFNTPWLYWFNFILELVSLIA), 211-231 (LFGNLYAGELIFILIAGTLGV), and 238-258 (FLWAAFHLLVIPLQAFIFMML).

This sequence belongs to the ATPase A chain family. F-type ATPases have 2 components, CF(1) - the catalytic core - and CF(0) - the membrane proton channel. CF(1) has five subunits: alpha(3), beta(3), gamma(1), delta(1), epsilon(1). CF(0) has three main subunits: a(1), b(2) and c(9-12). The alpha and beta chains form an alternating ring which encloses part of the gamma chain. CF(1) is attached to CF(0) by a central stalk formed by the gamma and epsilon chains, while a peripheral stalk is formed by the delta and b chains.

The protein resides in the cell inner membrane. In terms of biological role, key component of the proton channel; it plays a direct role in the translocation of protons across the membrane. The protein is ATP synthase subunit a of Pseudoalteromonas atlantica (strain T6c / ATCC BAA-1087).